The primary structure comprises 1105 residues: MHPAGEKRGGRPNDKYTAEALESIKQDLTRFEVQNNHRNNQNYTPLRYTATNGRNDALTPDYHHAKQPMEPPPSASPAPDVVIPPPPAIVGQPGAGSISVSGVGVGVVGVANGRVPKMMTALMPNKLIRKPSIERDTASSHYLRCSPALDSGAGSSRSDSPHSHHTHQPSSRTVGNPGGNGGFSPSPSGFSEVAPPAPPPRNPTACSAATPPPPVPPTSQAYVKRRSPALNNRPPAIAPPTQRGNSPVITQNGLKNPQQQLTQQLKSLNLYPGGGSGAVVEPPPPYLIQGGAGGAAPPPPPPSYTASMQSRQSPTQSQQSDYRKSPSSGIYSATSAGSPSPITVSLPPAPLAKPQPRVYQARSQQPIIMQSVKSTQVQKPVLQTAVAPQSPSSASASNSPVHVLAAPPSYPQKSAAVVQQQQQAAAAAHQQQHQHQQSKPPTPTTPPLVGLNSKPNCLEPPSYAKSMQAKAATVVQQQQQQQQQQQQVQQQQVQQQQQQQQQQLQALRVLQAQAQRERDQRERDQRERERDQQKLANGNPGRQMLPPPPYQSNNNNNSEIKPPSCNNNNIQISNSNLATTPPIPPAKYNNNSSNTGANSSGGSNGSTGTTASSSTSCKKIKHASPIPERKKISKEKEEERKEFRIRQYSPQAFKFFMEQHIENVIKSYRQRTYRKNQLEKEMHKVGLPDQTQIEMRKMLNQKESNYIRLKRAKMDKSMFVKLKPIGVGAFGEVTLVSKIDTSNHLYAMKTLRKADVLKRNQVAHVKAERDILAEADNNWVVKLYYSFQDKDNLYFVMDYIPGGDLMSLLIKLGIFEEELARFYIAEVTCAVDSVHKMGFIHRDIKPDNILIDRDGHIKLTDFGLCTGFRWTHNSKYYQENGNHSRQDSMEPWEEYSENGPKPTVLERRRMRDHQRVLAHSLVGTPNYIAPEVLERSGYTQLCDYWSVGVILYEMLVGQPPFLANSPLETQQKVINWEKTLHIPPQAELSREATDLIRRLCASADKRLGKSVDEVKSHDFFKGIDFADMRKQKAPYIPEIKHPTDTSNFDPVDPEKLRSNDSTMSSGDDVDQNDRTFHGFFEFTFRRFFDDKQPPDMTDDQAPVYV.

Residues Val-33–Arg-54 show a composition bias toward polar residues. 5 disordered regions span residues Val-33–Val-81, Cys-145–Gly-253, Gly-273–Arg-362, Gln-383–Ser-462, and Ala-514–Phe-643. The segment covering Met-69–Val-81 has biased composition (pro residues). Residues Gln-242–Gly-253 show a composition bias toward polar residues. The span at Ser-307–Ser-320 shows a compositional bias: low complexity. Residues Ser-325–Thr-343 show a composition bias toward polar residues. Composition is skewed to low complexity over residues Ala-387–Pro-400 and Ala-415–Gln-437. The span at Gln-515–Gln-533 shows a compositional bias: basic and acidic residues. Low complexity-rich tracts occupy residues Gln-551–Asn-576 and Asn-589–Ser-616. The segment covering Pro-627–Phe-643 has biased composition (basic and acidic residues). Positions Phe-719 to Phe-1020 constitute a Protein kinase domain. ATP is bound by residues Ile-725–Val-733 and Lys-749. Asp-843 functions as the Proton acceptor in the catalytic mechanism. Disordered stretches follow at residues Gly-881–Pro-900 and Glu-1038–Asp-1070. Residues Lys-1021–Lys-1091 enclose the AGC-kinase C-terminal domain.

The protein belongs to the protein kinase superfamily. AGC Ser/Thr protein kinase family. Interacts with yki. Interacts with jub. Mg(2+) is required as a cofactor.

The protein resides in the cytoplasm. It is found in the cytosol. The protein localises to the cytoskeleton. Its subcellular location is the microtubule organizing center. It localises to the centrosome. The enzyme catalyses L-seryl-[protein] + ATP = O-phospho-L-seryl-[protein] + ADP + H(+). It catalyses the reaction L-threonyl-[protein] + ATP = O-phospho-L-threonyl-[protein] + ADP + H(+). Negative regulator of Yorkie (Yki) in the Hippo/SWH (Sav/Wts/Hpo) signaling pathway that plays a pivotal role in organ size control and tumor suppression by restricting proliferation and promoting apoptosis. The core of this pathway is composed of a kinase cascade wherein Hippo (Hpo), in complex with its regulatory protein Salvador (Sav), phosphorylates and activates Warts (Wts) in complex with its regulatory protein Mats, which in turn phosphorylates and inactivates the Yorkie (Yki) oncoprotein. The Hippo/SWH signaling pathway inhibits the activity of the transcriptional complex formed by Scalloped (sd) and Yki and the target genes of this pathway include cyclin-E (cycE), diap1 and bantam. Inhibits nuclear localization of Yki. Regulates salivary gland degradation in a PI3K-dependent manner and Yki- and Sd-independent, mechanism. This Drosophila melanogaster (Fruit fly) protein is Serine/threonine-protein kinase Warts (wts).